Consider the following 492-residue polypeptide: Catalase (492 aa).

Active-site residues include H65 and N138. Y348 is a heme binding site.

Belongs to the catalase family. In terms of assembly, homotetramer. Heme serves as cofactor.

It is found in the cytoplasm. Its subcellular location is the cytosol. The protein localises to the peroxisome matrix. It catalyses the reaction 2 H2O2 = O2 + 2 H2O. Functionally, catalyzes the degradation of hydrogen peroxide (H(2)O(2)) generated by peroxisomal oxidases to water and oxygen, thereby protecting cells from the toxic effects of hydrogen peroxide. In Vigna radiata var. radiata (Mung bean), this protein is Catalase.